The sequence spans 99 residues: Large ribosomal subunit protein uL23 (99 aa).

This sequence belongs to the universal ribosomal protein uL23 family. In terms of assembly, part of the 50S ribosomal subunit. Contacts protein L29, and trigger factor when it is bound to the ribosome.

Its function is as follows. One of the early assembly proteins it binds 23S rRNA. One of the proteins that surrounds the polypeptide exit tunnel on the outside of the ribosome. Forms the main docking site for trigger factor binding to the ribosome. The chain is Large ribosomal subunit protein uL23 from Shewanella sediminis (strain HAW-EB3).